A 317-amino-acid polypeptide reads, in one-letter code: Porphobilinogen deaminase (317 aa).

C245 carries the post-translational modification S-(dipyrrolylmethanemethyl)cysteine.

The protein belongs to the HMBS family. In terms of assembly, monomer. It depends on dipyrromethane as a cofactor.

The enzyme catalyses 4 porphobilinogen + H2O = hydroxymethylbilane + 4 NH4(+). The protein operates within porphyrin-containing compound metabolism; protoporphyrin-IX biosynthesis; coproporphyrinogen-III from 5-aminolevulinate: step 2/4. It functions in the pathway porphyrin-containing compound metabolism; chlorophyll biosynthesis. In terms of biological role, tetrapolymerization of the monopyrrole PBG into the hydroxymethylbilane pre-uroporphyrinogen in several discrete steps. The protein is Porphobilinogen deaminase of Synechococcus sp. (strain CC9902).